The sequence spans 1025 residues: Exportin-T (1025 aa).

Belongs to the exportin family.

The protein localises to the nucleus. It localises to the cytoplasm. In terms of biological role, tRNA nucleus export receptor which facilitates tRNA translocation across the nuclear pore complex. Involved in pre-tRNA splicing, probably by affecting the interaction of pre-tRNA with splicing endonuclease. This Yarrowia lipolytica (strain CLIB 122 / E 150) (Yeast) protein is Exportin-T (LOS1).